The primary structure comprises 373 residues: Enoyl-[acyl-carrier-protein] reductase, mitochondrial (373 aa).

Residues 1 to 53 (MLVSQRVTGARARAPQLAGLLEAWYRHGRTTSSYSALSEPSRVRALVYGNHGD) constitute a mitochondrion transit peptide. The residue at position 61 (K61) is an N6-acetyllysine; alternate. An N6-succinyllysine; alternate modification is found at K61. Y94 serves as the catalytic Proton donor. NADP(+) contacts are provided by residues N167, 193–196 (NSGV), and 216–218 (RDR). N6-acetyllysine; alternate is present on residues K252 and K267. 2 positions are modified to N6-succinyllysine; alternate: K252 and K267. NADP(+) is bound by residues 285 to 288 (YGGM) and 310 to 312 (FWL). K316 bears the N6-succinyllysine mark. K368 serves as a coordination point for NADP(+).

It belongs to the zinc-containing alcohol dehydrogenase family. Quinone oxidoreductase subfamily. As to quaternary structure, homodimer. As to expression, expressed in Purkinje cells (at protein level).

Its subcellular location is the mitochondrion. The catalysed reaction is a 2,3-saturated acyl-[ACP] + NADP(+) = a (2E)-enoyl-[ACP] + NADPH + H(+). The enzyme catalyses (2E)-butenoyl-[ACP] + NADPH + H(+) = butanoyl-[ACP] + NADP(+). It carries out the reaction (2E)-hexenoyl-[ACP] + NADPH + H(+) = hexanoyl-[ACP] + NADP(+). It catalyses the reaction (2E)-octenoyl-[ACP] + NADPH + H(+) = octanoyl-[ACP] + NADP(+). The catalysed reaction is (2E)-decenoyl-[ACP] + NADPH + H(+) = decanoyl-[ACP] + NADP(+). The enzyme catalyses (2E)-dodecenoyl-[ACP] + NADPH + H(+) = dodecanoyl-[ACP] + NADP(+). It carries out the reaction (2E)-tetradecenoyl-[ACP] + NADPH + H(+) = tetradecanoyl-[ACP] + NADP(+). It catalyses the reaction (2E)-hexadecenoyl-[ACP] + NADPH + H(+) = hexadecanoyl-[ACP] + NADP(+). Functionally, catalyzes the NADPH-dependent reduction of trans-2-enoyl thioesters in mitochondrial fatty acid synthesis (fatty acid synthesis type II). Fatty acid chain elongation in mitochondria uses acyl carrier protein (ACP) as an acyl group carrier, but the enzyme accepts both ACP and CoA thioesters as substrates in vitro. Displays a preference for medium-chain over short- and long-chain substrates. May provide the octanoyl chain used for lipoic acid biosynthesis, regulating protein lipoylation and mitochondrial respiratory activity particularly in Purkinje cells. Involved in iron homeostasis; affecting Fe-S cluster assembly and ceramide metabolism. Required for proper morphology and bioenergetic functions of mitochondria. Required for maintenance of neurons. The protein is Enoyl-[acyl-carrier-protein] reductase, mitochondrial (Mecr) of Mus musculus (Mouse).